A 179-amino-acid polypeptide reads, in one-letter code: uncharacterized protein (179 aa).

This is an uncharacterized protein from Rickettsia conorii (strain ATCC VR-613 / Malish 7).